We begin with the raw amino-acid sequence, 154 residues long: Urease subunit alpha (154 aa).

The region spanning 38–154 (GGIDTHIHFI…ADEMDIQVAI (117 aa)) is the Urease domain. Residues H43, H45, and K126 each coordinate Ni(2+). K126 bears the N6-carboxylysine mark. H128 is a substrate binding site.

It belongs to the metallo-dependent hydrolases superfamily. Urease alpha subunit family. As to quaternary structure, heterotrimer of UreA (gamma), UreB (beta) and UreC (alpha) subunits. Three heterotrimers associate to form the active enzyme. It depends on Ni cation as a cofactor. Carboxylation allows a single lysine to coordinate two nickel ions.

The protein localises to the cytoplasm. It catalyses the reaction urea + 2 H2O + H(+) = hydrogencarbonate + 2 NH4(+). The protein operates within nitrogen metabolism; urea degradation; CO(2) and NH(3) from urea (urease route): step 1/1. This is Urease subunit alpha (ureC) from Photobacterium damselae subsp. damselae (Listonella damsela).